Reading from the N-terminus, the 877-residue chain is Alanine--tRNA ligase (877 aa).

His567, His571, Cys669, and His673 together coordinate Zn(2+).

This sequence belongs to the class-II aminoacyl-tRNA synthetase family. It depends on Zn(2+) as a cofactor.

It is found in the cytoplasm. It catalyses the reaction tRNA(Ala) + L-alanine + ATP = L-alanyl-tRNA(Ala) + AMP + diphosphate. Functionally, catalyzes the attachment of alanine to tRNA(Ala) in a two-step reaction: alanine is first activated by ATP to form Ala-AMP and then transferred to the acceptor end of tRNA(Ala). Also edits incorrectly charged Ser-tRNA(Ala) and Gly-tRNA(Ala) via its editing domain. The sequence is that of Alanine--tRNA ligase from Rickettsia typhi (strain ATCC VR-144 / Wilmington).